The primary structure comprises 293 residues: Non-homologous end joining protein Ku (293 aa).

The 186-residue stretch at I10–A195 folds into the Ku domain. Residues S216–K229 form a required for dimerization region. The interval R260–A293 is disordered. The span at G265–G280 shows a compositional bias: basic and acidic residues.

Belongs to the prokaryotic Ku family. As to quaternary structure, homodimer, may form higher-order multimers on DNA. Non-dimerized protein does not stimulate LigD ligase activity. Probably interacts with LigD.

Functionally, with LigD forms a non-homologous end joining (NHEJ) DNA repair enzyme, which repairs dsDNA breaks with reduced fidelity. Stimulates rNTP addition to DSB and end joining (ligation) of linear DNA by LigD, on 3'-overhangs and probably also 5'-overhangs and blunt dsDNA breaks. Binds both ends of linear dsDNA protecting it from exonuclease activity. The sequence is that of Non-homologous end joining protein Ku from Pseudomonas aeruginosa (strain ATCC 15692 / DSM 22644 / CIP 104116 / JCM 14847 / LMG 12228 / 1C / PRS 101 / PAO1).